A 396-amino-acid polypeptide reads, in one-letter code: Ribosomal RNA large subunit methyltransferase G (396 aa).

It belongs to the methyltransferase superfamily. RlmG family.

It is found in the cytoplasm. The enzyme catalyses guanosine(1835) in 23S rRNA + S-adenosyl-L-methionine = N(2)-methylguanosine(1835) in 23S rRNA + S-adenosyl-L-homocysteine + H(+). Functionally, specifically methylates the guanine in position 1835 (m2G1835) of 23S rRNA. The protein is Ribosomal RNA large subunit methyltransferase G of Yersinia enterocolitica serotype O:8 / biotype 1B (strain NCTC 13174 / 8081).